The chain runs to 149 residues: Large ribosomal subunit protein bL9 (149 aa).

Belongs to the bacterial ribosomal protein bL9 family.

Its function is as follows. Binds to the 23S rRNA. The protein is Large ribosomal subunit protein bL9 of Leptospira borgpetersenii serovar Hardjo-bovis (strain JB197).